A 400-amino-acid polypeptide reads, in one-letter code: CCA-adding enzyme (400 aa).

Positions 28 and 31 each coordinate ATP. The CTP site is built by glycine 28 and arginine 31. Mg(2+) is bound by residues aspartate 41 and aspartate 43. ATP contacts are provided by arginine 112, aspartate 155, arginine 158, arginine 161, and arginine 164. Positions 112, 155, 158, 161, and 164 each coordinate CTP.

This sequence belongs to the tRNA nucleotidyltransferase/poly(A) polymerase family. Bacterial CCA-adding enzyme type 3 subfamily. In terms of assembly, homodimer. Mg(2+) is required as a cofactor.

It catalyses the reaction a tRNA precursor + 2 CTP + ATP = a tRNA with a 3' CCA end + 3 diphosphate. It carries out the reaction a tRNA with a 3' CCA end + 2 CTP + ATP = a tRNA with a 3' CCACCA end + 3 diphosphate. Its function is as follows. Catalyzes the addition and repair of the essential 3'-terminal CCA sequence in tRNAs without using a nucleic acid template. Adds these three nucleotides in the order of C, C, and A to the tRNA nucleotide-73, using CTP and ATP as substrates and producing inorganic pyrophosphate. tRNA 3'-terminal CCA addition is required both for tRNA processing and repair. Also involved in tRNA surveillance by mediating tandem CCA addition to generate a CCACCA at the 3' terminus of unstable tRNAs. While stable tRNAs receive only 3'-terminal CCA, unstable tRNAs are marked with CCACCA and rapidly degraded. This Staphylococcus aureus (strain COL) protein is CCA-adding enzyme.